The chain runs to 144 residues: Ribosomal RNA large subunit methyltransferase H (144 aa).

S-adenosyl-L-methionine is bound by residues leucine 63, glycine 92, and 111–116 (LSPLTF).

Belongs to the RNA methyltransferase RlmH family. Homodimer.

Its subcellular location is the cytoplasm. The catalysed reaction is pseudouridine(1915) in 23S rRNA + S-adenosyl-L-methionine = N(3)-methylpseudouridine(1915) in 23S rRNA + S-adenosyl-L-homocysteine + H(+). In terms of biological role, specifically methylates the pseudouridine at position 1915 (m3Psi1915) in 23S rRNA. This chain is Ribosomal RNA large subunit methyltransferase H, found in Synechococcus sp. (strain CC9902).